Consider the following 1376-residue polypeptide: MDRRSEAFKIPVPEVIPAGQILSTIEVSSHRTLFDFFKQIRSDDNGLYAAQFDVLLGTYCNTLTLVRFLELGLSVSCVCTKFPELNYVNDGTIQFEVQQPMIARDGPHPVDQPTHTYMMKHIEQRSLSAAFAIAAEALGLIGGTTLDGTQISSSLRVRAIQQLARNVQTVLDSFERGTADQLLRVLLEKAPPLTLLAPLQIYRDEGRLASRVNRAVLVSELKRRVIEDTFFLTKHERNRKELVVARLAELVNCTAPSVAVTRMTHSDTKGRPVDGVVVTTAGVRQRLLQGILTLEDMAADVPVTYGEMMITGTNLVTALVMGKAVRNLDDVAHHLLGMQRDQVRANEKLIKDYEDVPSTARVRADLVLVGDRLVFLEALEKRVYQATNVPYPLVGNLDLTFIIPLGIFKPATDRYSRHAGSFTPTPGQPDPRTYPPQTVYFFNKDGNLVQLSFDSAAGTVCHSSFLDVDSVLVAIRREPHELHCAFGAYVTLPPAGTLLDQMRRFFERWHMLMPARPRWTAEALMTIDQLLSPGNANLRLELHPAFDFFVAPADVVIPGPFDMPNVMPTVMAMPRLINGNIPLPLCPVEFRDSRGFELSVDRHRLNPATVLAVRGAFRDANYPMVFYILEAVIHGSERTFCALARLIIQCIVSYWRNTHQVAFVNNFYMIMYINAYLGNGELPEECTAIYRDLLEHVQALRRLVAEYTVPGEAVGGQGHDALNNVLLDPALLPPLIWDCDPILHRADMGRARAQELWVDGVDYAAIPWVEMAEVNFGNTGGHLVHNRPIRGENKRNPIVPHHDPEWSVLSKIYYYAVVPAFSRGNCCTMGVRYDRVYPLVQTVVIPDLGAEEIAPTSPSDPRHPLNPRHLVPNTLNILFHNARVAVDTDALLLLQEVVTNMAERTTPVLATAAPDAGTATAVTQEMRTFDGTLHHGILMMAYQRNDETLLEGTFFYPAPVNALFACPEHLGALPGLNAEVLEAARDVPPVPHFFGGNYYATVRQPVAQHAVQSRADENTLTYALMAGYFKLGPIALSHQFATGFHPGFAFTVVRQDRFLTENILFAEKASESYFMGQLQVNRHEAVGGVNFVLTQPRANVDLGVGFTAAYAAAALRTPVTDMGNLPQNLYLTRGTIPMLDGDADAYLRRVVNTGNRLGPQGPRPIFGQLMPATPAGVAHGQAAVCEFIVTPVSADLNYFRRPCNPRGRSAGPVYACDGEADAVDVMYDHTQGDPAYPSRATVNPWASQRNSYGDRLYNGKYNLNGASPVYSPCFRFFTPTEVEAKGRNMTQLIADVGASVAPSTSNTEIQFKRPHGSTDLVEDPCSLFQEAYPLLSSTDTALLRTPHIGEIGADEGHFAQYLIRDESPLKGCFPRI.

The protein belongs to the herpesviridae major capsid protein family. In terms of assembly, homomultimer. Makes the hexons and eleven out of twelve pentons. Interacts with triplex proteins 1/TRX1 and 2/TRX2; adjacent capsomers are linked together in groups of three by triplexes, heterotrimeric complexes composed of one molecule of TRX1 and two molecules of TRX2. Interacts with scaffold protein; this interaction allows efficient MCP transport to the host nucleus. Interacts with capsid vertex component 2/CVC2. Interacts with the small capsomere-interacting protein/SCP.

The protein resides in the virion. The protein localises to the host nucleus. Its function is as follows. Self-assembles to form an icosahedral capsid with a T=16 symmetry, about 200 nm in diameter, and consisting of 150 hexons and 12 pentons (total of 162 capsomers). Hexons form the edges and faces of the capsid and are each composed of six MCP molecules. In contrast, one penton is found at each of the 12 vertices. Eleven of the pentons are MCP pentamers, while the last vertex is occupied by the portal complex. The capsid is surrounded by a layer of proteinaceous material designated the tegument which, in turn, is enclosed in an envelope of host cell-derived lipids containing virus-encoded glycoproteins. The protein is Major capsid protein of Equus caballus (Horse).